The primary structure comprises 323 residues: 1D-myo-inositol 2-acetamido-2-deoxy-alpha-D-glucopyranoside deacetylase (323 aa).

Zn(2+)-binding residues include histidine 28, aspartate 31, and histidine 163.

Belongs to the MshB deacetylase family. Zn(2+) is required as a cofactor.

It carries out the reaction 1D-myo-inositol 2-acetamido-2-deoxy-alpha-D-glucopyranoside + H2O = 1D-myo-inositol 2-amino-2-deoxy-alpha-D-glucopyranoside + acetate. In terms of biological role, catalyzes the deacetylation of 1D-myo-inositol 2-acetamido-2-deoxy-alpha-D-glucopyranoside (GlcNAc-Ins) in the mycothiol biosynthesis pathway. In Streptomyces scabiei (strain 87.22), this protein is 1D-myo-inositol 2-acetamido-2-deoxy-alpha-D-glucopyranoside deacetylase.